A 440-amino-acid polypeptide reads, in one-letter code: Ribosomal protein uS12 methylthiotransferase RimO (440 aa).

In terms of domain architecture, MTTase N-terminal spans 1–117 (MKIFFISLGC…ITEVIDKVLG (117 aa)). Positions 10, 46, 80, 154, 158, and 161 each coordinate [4Fe-4S] cluster. In terms of domain architecture, Radical SAM core spans 140–370 (TTGGYYSFLK…MEIQQGIAFE (231 aa)). Residues 373–440 (ESMVGRKLKV…KEYDLIGTAE (68 aa)) form the TRAM domain.

This sequence belongs to the methylthiotransferase family. RimO subfamily. [4Fe-4S] cluster is required as a cofactor.

It is found in the cytoplasm. The enzyme catalyses L-aspartate(89)-[ribosomal protein uS12]-hydrogen + (sulfur carrier)-SH + AH2 + 2 S-adenosyl-L-methionine = 3-methylsulfanyl-L-aspartate(89)-[ribosomal protein uS12]-hydrogen + (sulfur carrier)-H + 5'-deoxyadenosine + L-methionine + A + S-adenosyl-L-homocysteine + 2 H(+). Its function is as follows. Catalyzes the methylthiolation of an aspartic acid residue of ribosomal protein uS12. This chain is Ribosomal protein uS12 methylthiotransferase RimO, found in Lachnoclostridium phytofermentans (strain ATCC 700394 / DSM 18823 / ISDg) (Clostridium phytofermentans).